Reading from the N-terminus, the 348-residue chain is Glycerol-1-phosphate dehydrogenase [NAD(P)+] (348 aa).

NAD(+) is bound by residues 94–98 and 116–119; these read GKPID and TAAS. Aspartate 121 serves as a coordination point for substrate. Serine 125 contributes to the NAD(+) binding site. A substrate-binding site is contributed by aspartate 168. Residues aspartate 168 and histidine 248 each contribute to the Zn(2+) site. Histidine 252 contributes to the substrate binding site. Residue histidine 264 participates in Zn(2+) binding.

It belongs to the glycerol-1-phosphate dehydrogenase family. The cofactor is Zn(2+).

Its subcellular location is the cytoplasm. It carries out the reaction sn-glycerol 1-phosphate + NAD(+) = dihydroxyacetone phosphate + NADH + H(+). The catalysed reaction is sn-glycerol 1-phosphate + NADP(+) = dihydroxyacetone phosphate + NADPH + H(+). Its pathway is membrane lipid metabolism; glycerophospholipid metabolism. Functionally, catalyzes the NAD(P)H-dependent reduction of dihydroxyacetonephosphate (DHAP or glycerone phosphate) to glycerol 1-phosphate (G1P). The G1P thus generated is used as the glycerophosphate backbone of phospholipids in the cellular membranes of Archaea. The sequence is that of Glycerol-1-phosphate dehydrogenase [NAD(P)+] from Haloquadratum walsbyi (strain DSM 16790 / HBSQ001).